A 436-amino-acid chain; its full sequence is Protein translocase subunit SecY (436 aa).

A run of 8 helical transmembrane segments spans residues 17 to 37, 72 to 92, 122 to 142, 146 to 166, 209 to 229, 269 to 289, 309 to 329, and 380 to 400; these read ILLT…PVPY, FGLL…IQLL, TFFW…EVIF, LQVY…VLWF, FSNI…CIYI, VMPL…FEII, ISYW…IFFF, and IFLI…NLNI.

The protein belongs to the SecY/SEC61-alpha family. As to quaternary structure, component of the plastid Sec protein translocase complex, which is composed of at least SecY and SecE.

Its subcellular location is the plastid. It localises to the chloroplast thylakoid membrane. The central subunit of the protein translocation channel SecYE. Consists of two halves. These two domains form a lateral gate at the front which open onto the bilayer between TMs 2 and 7, and are clamped together by SecE at the back. The channel is closed by both a pore ring composed of hydrophobic SecY resides and a short helix (helix 2A) on the extracellular side of the membrane which forms a plug. This Vaucheria litorea (Yellow-green alga) protein is Protein translocase subunit SecY.